The following is a 214-amino-acid chain: Large ribosomal subunit protein bL25 (214 aa).

Disordered regions lie at residues 1-23 (MSNE…SRRL) and 182-214 (DHDQ…ASEE). Residues 200 to 214 (DDDDAAEGEEAASEE) are compositionally biased toward acidic residues.

It belongs to the bacterial ribosomal protein bL25 family. CTC subfamily. In terms of assembly, part of the 50S ribosomal subunit; part of the 5S rRNA/L5/L18/L25 subcomplex. Contacts the 5S rRNA. Binds to the 5S rRNA independently of L5 and L18.

In terms of biological role, this is one of the proteins that binds to the 5S RNA in the ribosome where it forms part of the central protuberance. In Alcanivorax borkumensis (strain ATCC 700651 / DSM 11573 / NCIMB 13689 / SK2), this protein is Large ribosomal subunit protein bL25.